Consider the following 615-residue polypeptide: 70 kDa neurofilament protein (615 aa).

Residues 1 to 31 (MSVTQKKTEISTTTTYEGESRPSSGMSGFSY) form a disordered region. The head stretch occupies residues 1-99 (MSVTQKKTEI…KANREREKQD (99 aa)). Positions 21-30 (RPSSGMSGFS) are enriched in polar residues. In terms of domain architecture, IF rod spans 96–449 (EKQDMRDLNE…KLLEGEESRV (354 aa)). Residues 100–135 (MRDLNERFANYIEKVRFLEAQNKKLAGELEELKSKW) are coil 1A. The tract at residues 136-145 (GKETSAIKEM) is linker 1. Positions 146–284 (YETELEEARK…VHAQELKELA (139 aa)) are coil 1B. Residues 285–303 (ALAYRDTTAENREFWRNEL) are linker 12. The segment at 304-449 (AQAIRDIQQE…KLLEGEESRV (146 aa)) is coil 2. The interval 450–615 (GMKQIVEQVV…ANYTQNTVYQ (166 aa)) is tail. An LTD domain is found at 499-612 (AKTTYQRTSK…EDKANYTQNT (114 aa)).

It belongs to the intermediate filament family.

The chain is 70 kDa neurofilament protein from Doryteuthis pealeii (Longfin inshore squid).